A 1288-amino-acid polypeptide reads, in one-letter code: Structural maintenance of chromosomes protein 4 (1288 aa).

Polar residues predominate over residues 1–10; sequence MPRKGTQPST. The disordered stretch occupies residues 1–55; sequence MPRKGTQPSTARRREEGPPPPSPDGASSDAEPEPPSGRTESPATAAETASEELDN. Phosphoserine occurs at positions 22 and 28. Residue T39 is modified to Phosphothreonine. Over residues 39–48 the composition is skewed to low complexity; it reads TESPATAAET. S41 and S50 each carry phosphoserine. 113–120 is an ATP binding site; the sequence is GPNGSGKS. At S143 the chain carries Phosphoserine. A coiled-coil region spans residues 272–588; that stretch reads RRVEILNEHR…LFQKVEEAKS (317 aa). N6-acetyllysine occurs at positions 381 and 679. Residues 613–727 enclose the SMC hinge domain; that stretch reads PGIYGRLGDL…ADNLDQATRV (115 aa). Residues 767–1020 are a coiled coil; sequence LVIEISEEEV…ALSIKLKLEQ (254 aa). A phosphoserine mark is found at S982 and S1056. Residues 1109–1129 adopt a coiled-coil conformation; that stretch reads ELDKITYERDSFRQAYEDLRK.

The protein belongs to the SMC family. SMC4 subfamily. In terms of assembly, forms a heterodimer with SMC2. Component of the condensin complex, which contains the SMC2 and SMC4 heterodimer, and three non SMC subunits that probably regulate the complex: BRRN1/CAPH, CNAP1/CAPD2 and CAPG. Widely expressed. Higher expression in testis, colon, thymus.

It localises to the nucleus. The protein localises to the cytoplasm. The protein resides in the chromosome. Its function is as follows. Central component of the condensin complex, a complex required for conversion of interphase chromatin into mitotic-like condense chromosomes. The condensin complex probably introduces positive supercoils into relaxed DNA in the presence of type I topoisomerases and converts nicked DNA into positive knotted forms in the presence of type II topoisomerases. This Homo sapiens (Human) protein is Structural maintenance of chromosomes protein 4 (SMC4).